The primary structure comprises 431 residues: CinA-like protein (431 aa).

This sequence belongs to the CinA family.

The protein is CinA-like protein of Chlorobium luteolum (strain DSM 273 / BCRC 81028 / 2530) (Pelodictyon luteolum).